Here is a 400-residue protein sequence, read N- to C-terminus: Ornithine aminotransferase (400 aa).

The residue at position 254 (Lys254) is an N6-(pyridoxal phosphate)lysine.

This sequence belongs to the class-III pyridoxal-phosphate-dependent aminotransferase family. OAT subfamily. Pyridoxal 5'-phosphate serves as cofactor.

It localises to the cytoplasm. The enzyme catalyses a 2-oxocarboxylate + L-ornithine = L-glutamate 5-semialdehyde + an L-alpha-amino acid. Its pathway is amino-acid biosynthesis; L-proline biosynthesis; L-glutamate 5-semialdehyde from L-ornithine: step 1/1. Functionally, catalyzes the interconversion of ornithine to glutamate semialdehyde. This chain is Ornithine aminotransferase, found in Exiguobacterium sp. (strain ATCC BAA-1283 / AT1b).